Consider the following 395-residue polypeptide: MAKEKFDRSKPHVNIGTIGHVDHGKTTLTAAITTVLAKKGFADAQAYDQIDGAPEERERGITISTAHVEYQTDNRHYAHVDCPGHADYVKNMITGAAQMDGAILVVSAADGPMPQTREHILLSRQVGVPYIVVFMNKCDMVDDEELLELVEMEIRDLLTEYEFPGDDIPVIKGSALKALQGEADWEAKIDELMEAVDSYIPTPERDTDKPFMMPVEDVFSITGRGTVATGRVERGQVKVGDEVEVIGIEEESKKVVVTGVEMFRKLLDYAEAGDNIGALLRGVAREDIQRGQVLAKPGSITPHTNFKAETYVLTKEEGGRHTPFFNNYRPQFYFRTTDVTGIVTLPEGTEMVMPGDNIELAVELIAPIAIEDGTKFSIREGGRTVGAGVVSNISK.

The 195-residue stretch at 10-204 folds into the tr-type G domain; it reads KPHVNIGTIG…AVDSYIPTPE (195 aa). The segment at 19 to 26 is G1; sequence GHVDHGKT. Residue 19–26 participates in GTP binding; it reads GHVDHGKT. A Mg(2+)-binding site is contributed by threonine 26. Residues 60 to 64 form a G2 region; it reads GITIS. The tract at residues 81 to 84 is G3; that stretch reads DCPG. GTP-binding positions include 81–85 and 136–139; these read DCPGH and NKCD. Residues 136 to 139 form a G4 region; sequence NKCD. The tract at residues 174-176 is G5; it reads SAL.

Belongs to the TRAFAC class translation factor GTPase superfamily. Classic translation factor GTPase family. EF-Tu/EF-1A subfamily. In terms of assembly, monomer. Post-translationally, phosphorylated on serine and/or threonine residue(s). Dephosphorylated by stp.

It localises to the cytoplasm. It catalyses the reaction GTP + H2O = GDP + phosphate + H(+). GTP hydrolase that promotes the GTP-dependent binding of aminoacyl-tRNA to the A-site of ribosomes during protein biosynthesis. This is Elongation factor Tu from Listeria innocua serovar 6a (strain ATCC BAA-680 / CLIP 11262).